The sequence spans 461 residues: 3-deoxy-D-manno-octulosonic acid transferase (461 aa).

The helical; Signal-anchor transmembrane segment at M2 to I22 threads the bilayer. The RPE1 insert domain maps to S47–Y88. Catalysis depends on E102, which acts as the Proton acceptor. Residues P306 to R307, F347 to E349, and N372 to E375 each bind CMP.

It belongs to the glycosyltransferase group 1 family. Glycosyltransferase 30 subfamily.

Its subcellular location is the cell inner membrane. It carries out the reaction lipid IVA (E. coli) + CMP-3-deoxy-beta-D-manno-octulosonate = alpha-Kdo-(2-&gt;6)-lipid IVA (E. coli) + CMP + H(+). The protein operates within bacterial outer membrane biogenesis; LPS core biosynthesis. In terms of biological role, involved in lipopolysaccharide (LPS) biosynthesis. Catalyzes the transfer of 3-deoxy-D-manno-octulosonate (Kdo) residue(s) from CMP-Kdo to lipid IV(A), the tetraacyldisaccharide-1,4'-bisphosphate precursor of lipid A. This is 3-deoxy-D-manno-octulosonic acid transferase (waaA) from Rickettsia prowazekii (strain Madrid E).